The sequence spans 339 residues: Beta-ketoacyl-[acyl-carrier-protein] synthase III (339 aa).

Catalysis depends on residues cysteine 119 and histidine 262. The tract at residues 263-267 is ACP-binding; the sequence is QANQR. Residue asparagine 292 is part of the active site.

This sequence belongs to the thiolase-like superfamily. FabH family. Homodimer.

It is found in the cytoplasm. It catalyses the reaction malonyl-[ACP] + acetyl-CoA + H(+) = 3-oxobutanoyl-[ACP] + CO2 + CoA. It participates in lipid metabolism; fatty acid biosynthesis. Functionally, catalyzes the condensation reaction of fatty acid synthesis by the addition to an acyl acceptor of two carbons from malonyl-ACP. Catalyzes the first condensation reaction which initiates fatty acid synthesis and may therefore play a role in governing the total rate of fatty acid production. Possesses both acetoacetyl-ACP synthase and acetyl transacylase activities. Its substrate specificity determines the biosynthesis of branched-chain and/or straight-chain of fatty acids. This Prochlorococcus marinus (strain MIT 9313) protein is Beta-ketoacyl-[acyl-carrier-protein] synthase III.